Consider the following 312-residue polypeptide: Light-independent protochlorophyllide reductase iron-sulfur ATP-binding protein (312 aa).

ATP contacts are provided by residues 55 to 60 and K84; that span reads GIGKST. Mg(2+) is bound at residue S59. Positions 140 and 174 each coordinate [4Fe-4S] cluster. Residues 225-226 and 249-251 contribute to the ATP site; these read NR and PDL.

The protein belongs to the NifH/BchL/ChlL family. As to quaternary structure, homodimer. Protochlorophyllide reductase is composed of three subunits; BchL, BchN and BchB. It depends on [4Fe-4S] cluster as a cofactor.

The enzyme catalyses chlorophyllide a + oxidized 2[4Fe-4S]-[ferredoxin] + 2 ADP + 2 phosphate = protochlorophyllide a + reduced 2[4Fe-4S]-[ferredoxin] + 2 ATP + 2 H2O. The protein operates within porphyrin-containing compound metabolism; bacteriochlorophyll biosynthesis (light-independent). Component of the dark-operative protochlorophyllide reductase (DPOR) that uses Mg-ATP and reduced ferredoxin to reduce ring D of protochlorophyllide (Pchlide) to form chlorophyllide a (Chlide). This reaction is light-independent. The L component serves as a unique electron donor to the NB-component of the complex, and binds Mg-ATP. The polypeptide is Light-independent protochlorophyllide reductase iron-sulfur ATP-binding protein (Rhodopseudomonas palustris (strain BisB18)).